A 466-amino-acid chain; its full sequence is Replicative helicase loading/DNA remodeling protein DnaB (466 aa).

The tract at residues 3–113 is DDBH1; the sequence is RQAFEFGLRP…ETQFVYQLIQ (111 aa). Residues 200 to 292 are DDBH2-1; the sequence is EMLRQMLGKH…TSSSAGKSSE (93 aa). The segment at 293-401 is DDBH2-2; it reads VNPKPQSDEW…QPKNEGSSGN (109 aa).

It belongs to the DnaB/DnaD family. As to quaternary structure, homotetramer, higher-order oligomers are induced by ssDNA. The DNA replisome assembles sequentially on oriC in this order; DnaA, DnaD, DnaB, DnaI-DnaC helicase. Part of the replication restart primosome, PriA binds first, then DnaD and subsequently DnaB bind.

Functionally, helps DnaI load the DnaC replicative helicase onto single-stranded (ss)DNA. During DNA replication from the origin of replication (oriC) in the DNA replisome, DnaB and DnaD are required after DnaA and before subsequent helicase DnaC loading. Component of the replication restart primosome, which reloads the replicative helicase on sites other than oriC. Essential for replication initiation of the chromosome and plasmids. Remodels DNA, laterally compacts supercoiled plasmid and linear DNA. Binds supercoiled, nicked and linear double-stranded (ds)DNA and phage phiX174 single-stranded (ss)DNA; phiX174 ssDNA is a better substrate than for B.subtilis. No binding to phage M13 ssDNA although it induces oligomers. The sequence is that of Replicative helicase loading/DNA remodeling protein DnaB from Staphylococcus aureus (strain NCTC 8325 / PS 47).